Consider the following 622-residue polypeptide: DNA mismatch repair protein MutL (622 aa).

Basic and acidic residues predominate over residues Ser399–Glu414. Residues Ser399–Pro422 form a disordered region.

This sequence belongs to the DNA mismatch repair MutL/HexB family.

Its function is as follows. This protein is involved in the repair of mismatches in DNA. It is required for dam-dependent methyl-directed DNA mismatch repair. May act as a 'molecular matchmaker', a protein that promotes the formation of a stable complex between two or more DNA-binding proteins in an ATP-dependent manner without itself being part of a final effector complex. The polypeptide is DNA mismatch repair protein MutL (Phocaeicola vulgatus (strain ATCC 8482 / DSM 1447 / JCM 5826 / CCUG 4940 / NBRC 14291 / NCTC 11154) (Bacteroides vulgatus)).